The sequence spans 264 residues: Fibroblast growth factor 5 (264 aa).

Residues 1–20 form the signal peptide; that stretch reads MSLSLLFLIFCSHLIHSAWA. Residues 25–81 form a disordered region; sequence RLTPEGQPAPPRNPGDSSGSRGRSSATFSSSSASSPVAASPGSQGSGSEHSSFQWSP. Positions 38–72 are enriched in low complexity; it reads PGDSSGSRGRSSATFSSSSASSPVAASPGSQGSGS. N-linked (GlcNAc...) asparagine glycosylation occurs at Asn-108. Residues 227–254 are disordered; it reads FTVTVPEKKKPPVKPKVPLSQPRRSPSP.

It belongs to the heparin-binding growth factors family. As to quaternary structure, interacts with FGFR1 and FGFR2. Affinity between fibroblast growth factors (FGFs) and their receptors is increased by heparan sulfate glycosaminoglycans that function as coreceptors.

It localises to the secreted. Functionally, plays an important role in the regulation of cell proliferation and cell differentiation. Required for normal regulation of the hair growth cycle. Functions as an inhibitor of hair elongation by promoting progression from anagen, the growth phase of the hair follicle, into catagen the apoptosis-induced regression phase. This is Fibroblast growth factor 5 (Fgf5) from Mus musculus (Mouse).